The primary structure comprises 306 residues: Putative transcriptional regulator (306 aa).

The 61-residue stretch at 1-61 (MIKRNLNDLL…TRTTRSVSPT (61 aa)) folds into the HTH lysR-type domain. The segment at residues 21-40 (FTRAAAQLGVTQSALSQSIS) is a DNA-binding region (H-T-H motif).

The protein belongs to the LysR transcriptional regulatory family.

May have a role in the regulation of oprD expression. The sequence is that of Putative transcriptional regulator from Pseudomonas aeruginosa (strain ATCC 15692 / DSM 22644 / CIP 104116 / JCM 14847 / LMG 12228 / 1C / PRS 101 / PAO1).